Reading from the N-terminus, the 426-residue chain is Probable auxin efflux carrier component 9 (426 aa).

At 1-6 (MITGSE) the chain is on the extracellular side. Residues 7–27 (VYQVVEAMAPLYTAAALGYGS) form a helical membrane-spanning segment. At 28-38 (VRWLKAFSNEQ) the chain is on the cytoplasmic side. Residues 39 to 59 (CAGINHFVALYAVPVLIFDMV) form a helical membrane-spanning segment. V51 serves as a coordination point for (indol-3-yl)acetate. Over 60–70 (STNNVYKMNGR) the chain is Extracellular. The helical transmembrane segment at 71 to 91 (LIAADTLQKAVLLLGLMAWAL) threads the bilayer. At 92–114 (WERSRARGAGAKAKAAVSSPLQW) the chain is on the cytoplasmic side. The chain crosses the membrane as a helical span at residues 115–135 (VITCFSVASLPNTIIMGVPLL). (indol-3-yl)acetate contacts are provided by N126 and I128. The Extracellular segment spans residues 136-145 (NGMYGPVSKD). A helical membrane pass occupies residues 146–166 (LMKQIVVMQFCIWYNVIIFLY). Residue Y159 coordinates (indol-3-yl)acetate. Residues 167–286 (EYMAARRSAS…LLQIPNTYAS (120 aa)) lie on the Cytoplasmic side of the membrane. Residues 232-258 (RDGVSGETTAAAKEVSSGEVAPVEEEE) are disordered. Residues 287 to 307 (FLGLIWSLIAFKCGFSMPKIV) traverse the membrane as a helical segment. Over 308 to 310 (EDS) the chain is Extracellular. Residues 311 to 331 (LFTIRTTAVGLSMFSSGTFIA) form a helical membrane-spanning segment. The Cytoplasmic portion of the chain corresponds to 332-347 (RQSRFVPCGYKIASFS). The helical transmembrane segment at 348-368 (MVIKFLIGPVVMLFASLVIGM) threads the bilayer. Residues 369–371 (HGT) are Extracellular-facing. A helical membrane pass occupies residues 372-392 (LLHIAVVQAALPLAVTSFVYA). Residue V386 participates in (indol-3-yl)acetate binding. Topologically, residues 393-405 (EEYKVHADIMSTG) are cytoplasmic. A helical transmembrane segment spans residues 406–426 (VILGIFISLPVTIVYYILLGL).

Belongs to the auxin efflux carrier (TC 2.A.69.1) family. As to quaternary structure, homodimer. Expressed in roots, leaves and shoot apex. Expressed in roots, stem bases, stems, leaves and young panicles.

It localises to the membrane. In terms of biological role, may act as a component of the auxin efflux carrier. In Oryza sativa subsp. japonica (Rice), this protein is Probable auxin efflux carrier component 9.